An 84-amino-acid chain; its full sequence is Small ribosomal subunit protein uS17c (84 aa).

This sequence belongs to the universal ribosomal protein uS17 family. As to quaternary structure, part of the 30S ribosomal subunit.

The protein resides in the plastid. It is found in the chloroplast. In terms of biological role, one of the primary rRNA binding proteins, it binds specifically to the 5'-end of 16S ribosomal RNA. The chain is Small ribosomal subunit protein uS17c (rps17) from Phaeodactylum tricornutum (strain CCAP 1055/1).